A 287-amino-acid polypeptide reads, in one-letter code: Protease HtpX (287 aa).

The next 2 membrane-spanning stretches (helical) occupy residues Ile-4–Ile-24 and Gly-33–Ile-53. Residue His-139 participates in Zn(2+) binding. Glu-140 is a catalytic residue. Residue His-143 participates in Zn(2+) binding. A run of 2 helical transmembrane segments spans residues Leu-154 to Ile-174 and Ala-195 to Phe-215. A Zn(2+)-binding site is contributed by Glu-220.

The protein belongs to the peptidase M48B family. The cofactor is Zn(2+).

The protein localises to the cell inner membrane. The protein is Protease HtpX of Shewanella sp. (strain MR-4).